The primary structure comprises 324 residues: Anthranilate phosphoribosyltransferase (324 aa).

Residues Gly-72, 75–76 (GD), Thr-80, 82–85 (NVST), 99–107 (KHGNVSVTS), and Ser-111 contribute to the 5-phospho-alpha-D-ribose 1-diphosphate site. Gly-72 is an anthranilate binding site. Ser-84 contacts Mg(2+). Asn-102 provides a ligand contact to anthranilate. Arg-157 is a binding site for anthranilate. Asp-215 and Glu-216 together coordinate Mg(2+).

This sequence belongs to the anthranilate phosphoribosyltransferase family. As to quaternary structure, homodimer. Mg(2+) serves as cofactor.

The enzyme catalyses N-(5-phospho-beta-D-ribosyl)anthranilate + diphosphate = 5-phospho-alpha-D-ribose 1-diphosphate + anthranilate. The protein operates within amino-acid biosynthesis; L-tryptophan biosynthesis; L-tryptophan from chorismate: step 2/5. Its function is as follows. Catalyzes the transfer of the phosphoribosyl group of 5-phosphorylribose-1-pyrophosphate (PRPP) to anthranilate to yield N-(5'-phosphoribosyl)-anthranilate (PRA). The sequence is that of Anthranilate phosphoribosyltransferase from Pyrococcus furiosus (strain ATCC 43587 / DSM 3638 / JCM 8422 / Vc1).